A 214-amino-acid polypeptide reads, in one-letter code: 3,4-dihydroxy-2-butanone 4-phosphate synthase (214 aa).

Residues 37–38, Asp-42, 150–154, and Glu-174 contribute to the D-ribulose 5-phosphate site; these read RE and RRGHT. Glu-38 lines the Mg(2+) pocket. Residue His-153 coordinates Mg(2+).

The protein belongs to the DHBP synthase family. Homodimer. Mg(2+) serves as cofactor. The cofactor is Mn(2+).

It carries out the reaction D-ribulose 5-phosphate = (2S)-2-hydroxy-3-oxobutyl phosphate + formate + H(+). It functions in the pathway cofactor biosynthesis; riboflavin biosynthesis; 2-hydroxy-3-oxobutyl phosphate from D-ribulose 5-phosphate: step 1/1. Catalyzes the conversion of D-ribulose 5-phosphate to formate and 3,4-dihydroxy-2-butanone 4-phosphate. The chain is 3,4-dihydroxy-2-butanone 4-phosphate synthase from Desulfotalea psychrophila (strain LSv54 / DSM 12343).